A 393-amino-acid polypeptide reads, in one-letter code: Methyltransferase-like protein 22 (393 aa).

A disordered region spans residues 54-87 (WTDSGAEDSGPTDVSTEEMPPAGSGSGHSHEDLS). A Phosphoserine modification is found at Ser-120.

This sequence belongs to the methyltransferase superfamily. METTL22 family. Interacts with members of the heat shock protein 90 and 70 families; these proteins probably are methylation substrates.

It is found in the nucleus. The enzyme catalyses L-lysyl-[protein] + 3 S-adenosyl-L-methionine = N(6),N(6),N(6)-trimethyl-L-lysyl-[protein] + 3 S-adenosyl-L-homocysteine + 3 H(+). Protein N-lysine methyltransferase. Trimethylates KIN at Lys-135 (in vitro). The sequence is that of Methyltransferase-like protein 22 (Mettl22) from Mus musculus (Mouse).